The primary structure comprises 123 residues: Small ribosomal subunit protein uS12 (123 aa).

Asp89 is modified (3-methylthioaspartic acid).

This sequence belongs to the universal ribosomal protein uS12 family. Part of the 30S ribosomal subunit. Contacts proteins S8 and S17. May interact with IF1 in the 30S initiation complex.

Its function is as follows. With S4 and S5 plays an important role in translational accuracy. In terms of biological role, interacts with and stabilizes bases of the 16S rRNA that are involved in tRNA selection in the A site and with the mRNA backbone. Located at the interface of the 30S and 50S subunits, it traverses the body of the 30S subunit contacting proteins on the other side and probably holding the rRNA structure together. The combined cluster of proteins S8, S12 and S17 appears to hold together the shoulder and platform of the 30S subunit. The chain is Small ribosomal subunit protein uS12 from Caulobacter vibrioides (strain ATCC 19089 / CIP 103742 / CB 15) (Caulobacter crescentus).